Consider the following 167-residue polypeptide: Gametocyte-specific factor 1 (167 aa).

Phosphoserine is present on Ser8. 2 consecutive CHHC U11-48K-type zinc fingers follow at residues Leu14–His41 and Leu48–Ser75. Zn(2+) is bound by residues Cys17, His23, His33, Cys37, Cys51, His57, His67, and Cys71.

Belongs to the UPF0224 (FAM112) family. As to expression, expressed abundantly in adult testis, at moderate levels in unfertilized eggs and ovaries and weakly in embryonic stem cells.

It localises to the cytoplasm. Its function is as follows. Required for spermatogenesis and is involved in the suppression of retrotransposon transcription in male germ cells. This chain is Gametocyte-specific factor 1, found in Mus musculus (Mouse).